Reading from the N-terminus, the 256-residue chain is Small ribosomal subunit protein eS1A (256 aa).

N-acetylalanine; partial is present on alanine 2.

This sequence belongs to the eukaryotic ribosomal protein eS1 family. In terms of assembly, component of the small ribosomal subunit. Mature ribosomes consist of a small (40S) and a large (60S) subunit. The 40S subunit contains about 33 different proteins and 1 molecule of RNA (18S). The 60S subunit contains about 49 different proteins and 3 molecules of RNA (25S, 5.8S and 5S).

The protein resides in the cytoplasm. The sequence is that of Small ribosomal subunit protein eS1A from Scheffersomyces stipitis (strain ATCC 58785 / CBS 6054 / NBRC 10063 / NRRL Y-11545) (Yeast).